Consider the following 295-residue polypeptide: Protoheme IX farnesyltransferase (295 aa).

Helical transmembrane passes span 24–44 (IMYL…GSMH), 45–65 (PFLA…AGAI), 94–114 (SALE…AIAV), 117–137 (ISAA…TIWL), 144–164 (NIVI…AAVT), 171–191 (SFIL…ALSL), 216–236 (KYIL…ALFL), 240–260 (LLYL…AVSV), and 272–292 (MFSY…FCSI).

It belongs to the UbiA prenyltransferase family. Protoheme IX farnesyltransferase subfamily.

It localises to the cell membrane. The catalysed reaction is heme b + (2E,6E)-farnesyl diphosphate + H2O = Fe(II)-heme o + diphosphate. It participates in porphyrin-containing compound metabolism; heme O biosynthesis; heme O from protoheme: step 1/1. Functionally, converts heme B (protoheme IX) to heme O by substitution of the vinyl group on carbon 2 of heme B porphyrin ring with a hydroxyethyl farnesyl side group. The sequence is that of Protoheme IX farnesyltransferase from Wolbachia pipientis wMel.